We begin with the raw amino-acid sequence, 391 residues long: 8-amino-7-oxononanoate synthase (391 aa).

A substrate-binding site is contributed by Arg20. Residue 106–107 coordinates pyridoxal 5'-phosphate; it reads GY. His131 is a substrate binding site. 3 residues coordinate pyridoxal 5'-phosphate: Ser178, His206, and Thr234. An N6-(pyridoxal phosphate)lysine modification is found at Lys237. Substrate is bound at residue Thr353.

This sequence belongs to the class-II pyridoxal-phosphate-dependent aminotransferase family. BioF subfamily. As to quaternary structure, homodimer. Pyridoxal 5'-phosphate serves as cofactor.

The catalysed reaction is 6-carboxyhexanoyl-[ACP] + L-alanine + H(+) = (8S)-8-amino-7-oxononanoate + holo-[ACP] + CO2. It participates in cofactor biosynthesis; biotin biosynthesis. Functionally, catalyzes the decarboxylative condensation of pimeloyl-[acyl-carrier protein] and L-alanine to produce 8-amino-7-oxononanoate (AON), [acyl-carrier protein], and carbon dioxide. This is 8-amino-7-oxononanoate synthase from Trichlorobacter lovleyi (strain ATCC BAA-1151 / DSM 17278 / SZ) (Geobacter lovleyi).